Reading from the N-terminus, the 207-residue chain is Dephospho-CoA kinase (207 aa).

Residues 4-203 form the DPCK domain; sequence VIGLTGGIAS…EEGYIEKPNY (200 aa). 12 to 17 lines the ATP pocket; it reads ASGKST.

The protein belongs to the CoaE family.

Its subcellular location is the cytoplasm. The catalysed reaction is 3'-dephospho-CoA + ATP = ADP + CoA + H(+). Its pathway is cofactor biosynthesis; coenzyme A biosynthesis; CoA from (R)-pantothenate: step 5/5. Its function is as follows. Catalyzes the phosphorylation of the 3'-hydroxyl group of dephosphocoenzyme A to form coenzyme A. The polypeptide is Dephospho-CoA kinase (Staphylococcus aureus (strain MRSA252)).